Consider the following 200-residue polypeptide: Glycerol-3-phosphate acyltransferase (200 aa).

A run of 5 helical transmembrane segments spans residues Phe2–Val22, Lys51–Ala71, Ala84–Phe104, Leu114–Val134, and Phe159–Phe179.

It belongs to the PlsY family. Probably interacts with PlsX.

It localises to the cell inner membrane. It catalyses the reaction an acyl phosphate + sn-glycerol 3-phosphate = a 1-acyl-sn-glycero-3-phosphate + phosphate. Its pathway is lipid metabolism; phospholipid metabolism. In terms of biological role, catalyzes the transfer of an acyl group from acyl-phosphate (acyl-PO(4)) to glycerol-3-phosphate (G3P) to form lysophosphatidic acid (LPA). This enzyme utilizes acyl-phosphate as fatty acyl donor, but not acyl-CoA or acyl-ACP. In Neisseria meningitidis serogroup B (strain ATCC BAA-335 / MC58), this protein is Glycerol-3-phosphate acyltransferase.